Here is a 458-residue protein sequence, read N- to C-terminus: RuvB-like helicase 1 (458 aa).

The segment at 1-29 is disordered; sequence MVQISEVKGNSRDNRTAAHTHIKGLGLRP. 71-78 contributes to the ATP binding site; it reads GGPGTGKT.

This sequence belongs to the RuvB family. In terms of assembly, may form heterododecamers with RVB2. Component of the SWR1 chromatin remodeling complex, the INO80 chromatin remodeling complex, and of the R2TP complex.

The protein resides in the nucleus. It carries out the reaction ATP + H2O = ADP + phosphate + H(+). DNA helicase which participates in several chromatin remodeling complexes, including the SWR1 and the INO80 complexes. The SWR1 complex mediates the ATP-dependent exchange of histone H2A for the H2A variant HZT1 leading to transcriptional regulation of selected genes by chromatin remodeling. The INO80 complex remodels chromatin by shifting nucleosomes and is involved in DNA repair. Also involved in pre-rRNA processing. The polypeptide is RuvB-like helicase 1 (rvb1) (Emericella nidulans (strain FGSC A4 / ATCC 38163 / CBS 112.46 / NRRL 194 / M139) (Aspergillus nidulans)).